A 618-amino-acid polypeptide reads, in one-letter code: Pyranose 2-oxidase (618 aa).

His170 is modified (tele-8alpha-FAD histidine). Positions 441 and 443 each coordinate substrate. Catalysis depends on His540, which acts as the Proton acceptor. Asn583 is a catalytic residue.

This sequence belongs to the GMC oxidoreductase family. As to quaternary structure, homotetramer. FAD is required as a cofactor.

The catalysed reaction is D-glucose + O2 = 2-dehydro-D-glucose + H2O2. Functionally, catalyzes the oxidation of various aldopyranoses and disaccharides on carbon-2 to the corresponding 2-keto sugars concomitant with the reduction of O(2) to H(2)O(2). This is Pyranose 2-oxidase (p2ox) from Lyophyllum shimeji (Hon-shimeji).